The sequence spans 148 residues: Macrodomain Ter protein (148 aa).

This sequence belongs to the MatP family. In terms of assembly, homodimer.

It localises to the cytoplasm. Required for spatial organization of the terminus region of the chromosome (Ter macrodomain) during the cell cycle. Prevents early segregation of duplicated Ter macrodomains during cell division. Binds specifically to matS, which is a 13 bp signature motif repeated within the Ter macrodomain. This Haemophilus influenzae (strain 86-028NP) protein is Macrodomain Ter protein.